Consider the following 205-residue polypeptide: Small ribosomal subunit protein uS4 (205 aa).

The 69-residue stretch at 95–163 (RRLDNVVYRL…FKENLESRDP (69 aa)) folds into the S4 RNA-binding domain.

This sequence belongs to the universal ribosomal protein uS4 family. Part of the 30S ribosomal subunit. Contacts protein S5. The interaction surface between S4 and S5 is involved in control of translational fidelity.

One of the primary rRNA binding proteins, it binds directly to 16S rRNA where it nucleates assembly of the body of the 30S subunit. Functionally, with S5 and S12 plays an important role in translational accuracy. The polypeptide is Small ribosomal subunit protein uS4 (Persephonella marina (strain DSM 14350 / EX-H1)).